Here is a 176-residue protein sequence, read N- to C-terminus: MSRVGKSPIALQGAEVKLADGVITVKGPLGTITQAVNPLVKVANNDGTLNLAPADESREANALSGTMRAIIANAVHGVTKGFERKLTLVGVGYRAQAQGDKLNLSLGFSHPVVHQMPEGVKAETPTQTEIVIKGIDKQKVGQVAAEVRGYRPPEPYKGKGVRYADEVVILKETKKK.

The protein belongs to the universal ribosomal protein uL6 family. Part of the 50S ribosomal subunit.

In terms of biological role, this protein binds to the 23S rRNA, and is important in its secondary structure. It is located near the subunit interface in the base of the L7/L12 stalk, and near the tRNA binding site of the peptidyltransferase center. The sequence is that of Large ribosomal subunit protein uL6 from Burkholderia multivorans (strain ATCC 17616 / 249).